The primary structure comprises 323 residues: tRNA U34 carboxymethyltransferase (323 aa).

Carboxy-S-adenosyl-L-methionine contacts are provided by residues K91, W105, K110, G130, 181–182 (IE), M196, Y200, and R315.

The protein belongs to the class I-like SAM-binding methyltransferase superfamily. CmoB family. In terms of assembly, homotetramer.

It carries out the reaction carboxy-S-adenosyl-L-methionine + 5-hydroxyuridine(34) in tRNA = 5-carboxymethoxyuridine(34) in tRNA + S-adenosyl-L-homocysteine + H(+). Catalyzes carboxymethyl transfer from carboxy-S-adenosyl-L-methionine (Cx-SAM) to 5-hydroxyuridine (ho5U) to form 5-carboxymethoxyuridine (cmo5U) at position 34 in tRNAs. The polypeptide is tRNA U34 carboxymethyltransferase (Serratia proteamaculans (strain 568)).